The sequence spans 528 residues: Peptide chain release factor 3 (528 aa).

Residues 11 to 279 (EKRRTFAIIS…GLVEWAPKPL (269 aa)) form the tr-type G domain. GTP contacts are provided by residues 20-27 (SHPDAGKT), 88-92 (DTPGH), and 142-145 (NKCD).

Belongs to the TRAFAC class translation factor GTPase superfamily. Classic translation factor GTPase family. PrfC subfamily.

Its subcellular location is the cytoplasm. Increases the formation of ribosomal termination complexes and stimulates activities of RF-1 and RF-2. It binds guanine nucleotides and has strong preference for UGA stop codons. It may interact directly with the ribosome. The stimulation of RF-1 and RF-2 is significantly reduced by GTP and GDP, but not by GMP. This chain is Peptide chain release factor 3, found in Psychromonas ingrahamii (strain DSM 17664 / CCUG 51855 / 37).